Consider the following 141-residue polypeptide: Perlwapin-like protein (141 aa).

An N-terminal signal peptide occupies residues 1 to 19 (MNVYFILFLGVFAFIEVNC). One can recognise a WAP domain in the interval 23–71 (KSKSLGTCPKLDVSTVCVVDYKFNCLFQKQCPSGYRCCTYGCNRRCAAV). 6 disulfide bridges follow: Cys-30/Cys-60, Cys-39/Cys-64, Cys-47/Cys-59, Cys-53/Cys-68, Cys-81/Cys-105, and Cys-92/Cys-104.

Component of the organic matrix of calcified shell layers like nacre and prisms.

Its subcellular location is the secreted. The chain is Perlwapin-like protein from Mytilus galloprovincialis (Mediterranean mussel).